Consider the following 308-residue polypeptide: 4-hydroxyproline 2-epimerase (308 aa).

Cysteine 88 functions as the Proton acceptor in the catalytic mechanism. Substrate-binding positions include 89 to 90 (GH), histidine 208, and aspartate 232. Cysteine 236 (proton donor) is an active-site residue. 237-238 (GT) serves as a coordination point for substrate.

It belongs to the proline racemase family.

The enzyme catalyses trans-4-hydroxy-L-proline = cis-4-hydroxy-D-proline. Functionally, catalyzes the epimerization of trans-4-hydroxy-L-proline (t4LHyp) to cis-4-hydroxy-D-proline (c4DHyp). Is likely involved in a degradation pathway that converts t4LHyp to alpha-ketoglutarate. Can also catalyze the epimerization of trans-3-hydroxy-L-proline (t3LHyp) to cis-3-hydroxy-D-proline (c3DHyp), albeit with 200-fold lower efficiency. This is 4-hydroxyproline 2-epimerase from Pseudomonas putida (strain ATCC 700007 / DSM 6899 / JCM 31910 / BCRC 17059 / LMG 24140 / F1).